The chain runs to 250 residues: Probable replication-associated protein repA2 (250 aa).

Belongs to the IncFII RepA family.

Its function is as follows. This protein is essential for plasmid replication; it is involved in copy control functions. This Buchnera aphidicola subsp. Schizaphis graminum (strain Sg) protein is Probable replication-associated protein repA2 (repA2).